Reading from the N-terminus, the 21-residue chain is Fibrinogen beta chain (21 aa).

A Pyrrolidone carboxylic acid modification is found at Q1. Y6 is subject to Sulfotyrosine.

As to quaternary structure, heterohexamer; disulfide linked. Contains 2 sets of 3 non-identical chains (alpha, beta and gamma). The 2 heterotrimers are in head to head conformation with the N-termini in a small central domain. Post-translationally, conversion of fibrinogen to fibrin is triggered by thrombin, which cleaves fibrinopeptides A and B from alpha and beta chains, and thus exposes the N-terminal polymerization sites responsible for the formation of the soft clot.

It is found in the secreted. Cleaved by the protease thrombin to yield monomers which, together with fibrinogen alpha (FGA) and fibrinogen gamma (FGG), polymerize to form an insoluble fibrin matrix. Fibrin has a major function in hemostasis as one of the primary components of blood clots. In addition, functions during the early stages of wound repair to stabilize the lesion and guide cell migration during re-epithelialization. Was originally thought to be essential for platelet aggregation, based on in vitro studies using anticoagulated blood. However subsequent studies have shown that it is not absolutely required for thrombus formation in vivo. Enhances expression of SELP in activated platelets. Maternal fibrinogen is essential for successful pregnancy. Fibrin deposition is also associated with infection, where it protects against IFNG-mediated hemorrhage. May also facilitate the antibacterial immune response via both innate and T-cell mediated pathways. This is Fibrinogen beta chain (FGB) from Rangifer tarandus (Reindeer).